The sequence spans 340 residues: Coproporphyrin III ferrochelatase (340 aa).

2 residues coordinate Fe-coproporphyrin III: Ser-52 and Tyr-116. The Fe(2+) site is built by His-172 and Glu-255.

The protein belongs to the ferrochelatase family.

The protein resides in the cytoplasm. The catalysed reaction is Fe-coproporphyrin III + 2 H(+) = coproporphyrin III + Fe(2+). It participates in porphyrin-containing compound metabolism; protoheme biosynthesis. Functionally, involved in coproporphyrin-dependent heme b biosynthesis. Catalyzes the insertion of ferrous iron into coproporphyrin III to form Fe-coproporphyrin III. This Mycobacterium marinum (strain ATCC BAA-535 / M) protein is Coproporphyrin III ferrochelatase.